Here is a 242-residue protein sequence, read N- to C-terminus: Uridylate kinase (242 aa).

Residue 15–18 coordinates ATP; that stretch reads KLSG. The tract at residues 23–28 is involved in allosteric activation by GTP; it reads GAEGFG. G57 provides a ligand contact to UMP. ATP-binding residues include G58 and R62. Residues D77 and 138–145 contribute to the UMP site; that span reads TGNPFFTT. Residues T165, Y171, and D174 each coordinate ATP.

This sequence belongs to the UMP kinase family. In terms of assembly, homohexamer.

It localises to the cytoplasm. It carries out the reaction UMP + ATP = UDP + ADP. Its pathway is pyrimidine metabolism; CTP biosynthesis via de novo pathway; UDP from UMP (UMPK route): step 1/1. With respect to regulation, allosterically activated by GTP. Inhibited by UTP. Functionally, catalyzes the reversible phosphorylation of UMP to UDP. This is Uridylate kinase from Photorhabdus laumondii subsp. laumondii (strain DSM 15139 / CIP 105565 / TT01) (Photorhabdus luminescens subsp. laumondii).